A 753-amino-acid chain; its full sequence is Rsm22-cox11 tandem protein 2, mitochondrial (753 aa).

A mitochondrion-targeting transit peptide spans 1-39 (MPILTCRYKILFLYNLRNCFTFQNQRCLIPYGTTTTIRW). Positions 323, 329, 342, and 430 each coordinate [4Fe-4S] cluster. The helical transmembrane segment at 571–591 (IYYLVAISIFALGLTYAAVPL) threads the bilayer. Topologically, residues 592–753 (YRLFCSKTGY…TNGNLLTKLN (162 aa)) are mitochondrial intermembrane.

This sequence in the N-terminal section; belongs to the methyltransferase superfamily. Rsm22 family. The protein in the C-terminal section; belongs to the COX11/CtaG family. As to quaternary structure, associates with the mitochondrial ribosome (mitoribosome). Only transiently interacts with the mitoribosome. Post-translationally, specific enzymatic cleavages in vivo by mitochondrial processing peptidase (MPP) yield mature proteins including rsm22-2 and cox11-2.

The protein localises to the mitochondrion. It localises to the mitochondrion inner membrane. Its function is as follows. Mitochondrial ribosome (mitoribosome) assembly factor. Binds at the interface of the head and body domains of the mitochondrial small ribosomal subunit (mt-SSU), occluding the mRNA channel and preventing compaction of the head domain towards the body. Probable inactive methyltransferase: retains the characteristic folding and ability to bind S-adenosyl-L-methionine, but it probably lost its methyltransferase activity. Functionally, exerts its effect at some terminal stage of cytochrome c oxidase synthesis, probably by being involved in the insertion of the copper B into subunit I. The chain is Rsm22-cox11 tandem protein 2, mitochondrial (cox1102) from Schizosaccharomyces pombe (strain 972 / ATCC 24843) (Fission yeast).